We begin with the raw amino-acid sequence, 248 residues long: Protein FAM133A (248 aa).

Over residues 68–80 the composition is skewed to basic and acidic residues; the sequence is NWKKELEKSREKL. The interval 68 to 248 is disordered; the sequence is NWKKELEKSR…KKSGSSHKSR (181 aa). The segment covering 90–102 has biased composition (basic residues); it reads KRERKKKRKKKSC. Over residues 103–118 the composition is skewed to low complexity; the sequence is RSSSSSSSSDSSSSSS. A compositionally biased stretch (basic residues) spans 127–138; sequence QGKRRKKKKNRS. Basic and acidic residues-rich tracts occupy residues 147–156, 163–175, and 211–220; these read HESESESKES, SKDE…DVRS, and RCEEREQAKE. Positions 221–248 are enriched in basic residues; sequence KVKKKKKKQHKKHSKKKKKKSGSSHKSR.

It belongs to the FAM133 family.

The sequence is that of Protein FAM133A (FAM133A) from Homo sapiens (Human).